Consider the following 334-residue polypeptide: Galactinol synthase 3 (334 aa).

Lys97 is an active-site residue. 3 residues coordinate Mn(2+): Asp113, Asp115, and His251.

Belongs to the glycosyltransferase 8 family. Galactosyltransferase subfamily. The cofactor is a divalent metal cation.

The protein resides in the cytoplasm. It catalyses the reaction myo-inositol + UDP-alpha-D-galactose = alpha-D-galactosyl-(1-&gt;3)-1D-myo-inositol + UDP + H(+). Functionally, galactinol synthase involved in the biosynthesis of raffinose family oligosaccharides (RFOs) that function as osmoprotectants. May promote plant stress tolerance. The protein is Galactinol synthase 3 (GOLS3) of Arabidopsis thaliana (Mouse-ear cress).